The following is a 591-amino-acid chain: L-fucose isomerase (591 aa).

Catalysis depends on proton acceptor residues Glu-338 and Asp-362. Positions 338, 362, and 529 each coordinate Mn(2+).

This sequence belongs to the L-fucose isomerase family. It depends on Mn(2+) as a cofactor.

The protein localises to the cytoplasm. It carries out the reaction L-fucose = L-fuculose. Its pathway is carbohydrate degradation; L-fucose degradation; L-lactaldehyde and glycerone phosphate from L-fucose: step 1/3. Functionally, converts the aldose L-fucose into the corresponding ketose L-fuculose. This chain is L-fucose isomerase, found in Phocaeicola vulgatus (strain ATCC 8482 / DSM 1447 / JCM 5826 / CCUG 4940 / NBRC 14291 / NCTC 11154) (Bacteroides vulgatus).